Here is a 61-residue protein sequence, read N- to C-terminus: Small ribosomal subunit protein uS14 (61 aa).

The Zn(2+) site is built by Cys-24, Cys-27, Cys-40, and Cys-43.

The protein belongs to the universal ribosomal protein uS14 family. Zinc-binding uS14 subfamily. As to quaternary structure, part of the 30S ribosomal subunit. Contacts proteins S3 and S10. It depends on Zn(2+) as a cofactor.

Binds 16S rRNA, required for the assembly of 30S particles and may also be responsible for determining the conformation of the 16S rRNA at the A site. The polypeptide is Small ribosomal subunit protein uS14 (Campylobacter lari (strain RM2100 / D67 / ATCC BAA-1060)).